Reading from the N-terminus, the 78-residue chain is D-alanyl carrier protein (78 aa).

The region spanning 1-78 (MDFNQEVLSV…QIIKQLNELR (78 aa)) is the Carrier domain. Serine 36 is subject to O-(pantetheine 4'-phosphoryl)serine.

The protein belongs to the DltC family. Post-translationally, 4'-phosphopantetheine is transferred from CoA to a specific serine of apo-DCP.

The protein resides in the cytoplasm. The protein operates within cell wall biogenesis; lipoteichoic acid biosynthesis. Its function is as follows. Carrier protein involved in the D-alanylation of lipoteichoic acid (LTA). The loading of thioester-linked D-alanine onto DltC is catalyzed by D-alanine--D-alanyl carrier protein ligase DltA. The DltC-carried D-alanyl group is further transferred to cell membrane phosphatidylglycerol (PG) by forming an ester bond, probably catalyzed by DltD. D-alanylation of LTA plays an important role in modulating the properties of the cell wall in Gram-positive bacteria, influencing the net charge of the cell wall. This Bacillus licheniformis (strain ATCC 14580 / DSM 13 / JCM 2505 / CCUG 7422 / NBRC 12200 / NCIMB 9375 / NCTC 10341 / NRRL NRS-1264 / Gibson 46) protein is D-alanyl carrier protein.